We begin with the raw amino-acid sequence, 647 residues long: Calmodulin-binding protein 60 B (647 aa).

Residues 1-10 (MMDSGNNNMN) show a composition bias toward polar residues. Residues 1–26 (MMDSGNNNMNRAKRNLDGNDDDQPER) are disordered. Residues 8–85 (NMNRAKRNLD…TGSSGSSPKR (78 aa)) are calmodulin-binding. A Nuclear localization signal motif is present at residues 12 to 19 (AKRNLDGN). Residues 155 to 278 (EDDEDWTQEE…AFHKKLTAEG (124 aa)) form a DNA-binding region.

The protein belongs to the plant ACBP60 protein family. Interacts with calmodulin (CaM). In terms of tissue distribution, expressed in leaves, stems, flowers, developing seeds and root.

The protein resides in the nucleus. Transcription activator that binds DNA in a sequence-specific manner, likely 5'-GAAATTTTGG-3', to promote the expression of target genes. The sequence is that of Calmodulin-binding protein 60 B from Arabidopsis thaliana (Mouse-ear cress).